The following is a 226-amino-acid chain: Deoxyribose-phosphate aldolase (226 aa).

Asp84 acts as the Proton donor/acceptor in catalysis. Catalysis depends on Lys146, which acts as the Schiff-base intermediate with acetaldehyde. Catalysis depends on Lys188, which acts as the Proton donor/acceptor.

This sequence belongs to the DeoC/FbaB aldolase family. DeoC type 1 subfamily. Homodimer.

It is found in the cytoplasm. The enzyme catalyses 2-deoxy-D-ribose 5-phosphate = D-glyceraldehyde 3-phosphate + acetaldehyde. It participates in carbohydrate degradation; 2-deoxy-D-ribose 1-phosphate degradation; D-glyceraldehyde 3-phosphate and acetaldehyde from 2-deoxy-alpha-D-ribose 1-phosphate: step 2/2. In terms of biological role, catalyzes a reversible aldol reaction between acetaldehyde and D-glyceraldehyde 3-phosphate to generate 2-deoxy-D-ribose 5-phosphate. This chain is Deoxyribose-phosphate aldolase, found in Pyrobaculum aerophilum (strain ATCC 51768 / DSM 7523 / JCM 9630 / CIP 104966 / NBRC 100827 / IM2).